The chain runs to 144 residues: Phospholipase A2, membrane associated (144 aa).

Residues 1 to 20 (MKTLLLLAVIMIFGLLQAHG) form the signal peptide. Disulfide bonds link C46/C137, C48/C64, C63/C117, C69/C144, C70/C110, C79/C103, and C97/C108. Positions 47, 49, and 51 each coordinate Ca(2+). The active site involves H67. D68 lines the Ca(2+) pocket. D111 is an active-site residue.

The protein belongs to the phospholipase A2 family. The cofactor is Ca(2+). In terms of tissue distribution, expressed in various tissues including heart, kidney, liver, lung, pancreas, placenta, skeletal muscle, prostate, ovary, colon and small intestine. Not detected in lymphoid organs and brain. Expressed in platelets (at protein level).

The protein localises to the secreted. The protein resides in the cell membrane. Its subcellular location is the mitochondrion outer membrane. It catalyses the reaction a 1,2-diacyl-sn-glycero-3-phosphoethanolamine + H2O = a 1-acyl-sn-glycero-3-phosphoethanolamine + a fatty acid + H(+). The enzyme catalyses 1-hexadecanoyl-2-(9Z-octadecenoyl)-sn-glycero-3-phosphoethanolamine + H2O = 1-hexadecanoyl-sn-glycero-3-phosphoethanolamine + (9Z)-octadecenoate + H(+). The catalysed reaction is 1-hexadecanoyl-2-(9Z,12Z-octadecadienoyl)-sn-glycero-3-phosphoethanolamine + H2O = 1-hexadecanoyl-sn-glycero-3-phosphoethanolamine + (9Z,12Z)-octadecadienoate + H(+). It carries out the reaction 1-hexadecanoyl-2-(5Z,8Z,11Z,14Z-eicosatetraenoyl)-sn-glycero-3-phosphoethanolamine + H2O = 1-hexadecanoyl-sn-glycero-3-phosphoethanolamine + (5Z,8Z,11Z,14Z)-eicosatetraenoate + H(+). It catalyses the reaction N-hexadecanoyl-1,2-di-(9Z-octadecenoyl)-sn-glycero-3-phosphoethanolamine + H2O = N-hexadecanoyl-1-(9Z-octadecenoyl)-sn-glycero-3-phosphoethanolamine + (9Z)-octadecenoate + H(+). The enzyme catalyses 1,2-dihexadecanoyl-sn-glycero-3-phospho-(1'-sn-glycerol) + H2O = 1-hexadecanoyl-sn-glycero-3-phospho-(1'-sn-glycerol) + hexadecanoate + H(+). The catalysed reaction is 1-hexadecanoyl-2-(9Z-octadecenoyl)-sn-glycero-3-phosphoglycerol + H2O = 1-hexadecanoyl-sn-glycero-3-phosphoglycerol + (9Z)-octadecenoate + H(+). It carries out the reaction 1-hexadecanoyl-2-(9Z-octadecenoyl)-sn-glycero-3-phospho-(1'-sn-glycerol) + H2O = 1-hexadecanoyl-sn-glycero-3-phospho-(1'-sn-glycerol) + (9Z)-octadecenoate + H(+). It catalyses the reaction a 1,2-diacyl-sn-glycero-3-phosphocholine + H2O = a 1-acyl-sn-glycero-3-phosphocholine + a fatty acid + H(+). The enzyme catalyses 1,2-dihexadecanoyl-sn-glycero-3-phosphocholine + H2O = 1-hexadecanoyl-sn-glycero-3-phosphocholine + hexadecanoate + H(+). The catalysed reaction is 1-hexadecanoyl-2-(9Z-octadecenoyl)-sn-glycero-3-phosphocholine + H2O = 1-hexadecanoyl-sn-glycero-3-phosphocholine + (9Z)-octadecenoate + H(+). It carries out the reaction 1-hexadecanoyl-2-(9Z,12Z-octadecadienoyl)-sn-glycero-3-phosphocholine + H2O = (9Z,12Z)-octadecadienoate + 1-hexadecanoyl-sn-glycero-3-phosphocholine + H(+). It catalyses the reaction 1-hexadecanoyl-2-(4Z,7Z,10Z,13Z,16Z,19Z-docosahexaenoyl)-sn-glycero-3-phosphocholine + H2O = (4Z,7Z,10Z,13Z,16Z,19Z)-docosahexaenoate + 1-hexadecanoyl-sn-glycero-3-phosphocholine + H(+). In terms of biological role, secretory calcium-dependent phospholipase A2 that primarily targets extracellular phospholipids with implications in host antimicrobial defense, inflammatory response and tissue regeneration. Hydrolyzes the ester bond of the fatty acyl group attached at sn-2 position of phospholipids (phospholipase A2 activity) with preference for phosphatidylethanolamines and phosphatidylglycerols over phosphatidylcholines. Contributes to lipid remodeling of cellular membranes and generation of lipid mediators involved in pathogen clearance. Displays bactericidal activity against Gram-positive bacteria by directly hydrolyzing phospholipids of the bacterial membrane. Upon sterile inflammation, targets membrane phospholipids of extracellular mitochondria released from activated platelets, generating free unsaturated fatty acids such as arachidonate that is used by neighboring leukocytes to synthesize inflammatory eicosanoids such as leukotrienes. Simultaneously, by compromising mitochondrial membrane integrity, promotes the release in circulation of potent damage-associated molecular pattern molecules that activate the innate immune response. Plays a stem cell regulator role in the intestinal crypt. Within intracellular compartment mediates Paneth cell differentiation and its stem cell supporting functions by inhibiting Wnt signaling pathway in intestinal stem cell (ICS). Secreted in the intestinal lumen upon inflammation, acts in an autocrine way and promotes prostaglandin E2 synthesis that stimulates Wnt signaling pathway in ICS cells and tissue regeneration. May play a role in the biosynthesis of N-acyl ethanolamines that regulate energy metabolism and inflammation. Hydrolyzes N-acyl phosphatidylethanolamines to N-acyl lysophosphatidylethanolamines, which are further cleaved by a lysophospholipase D to release N-acyl ethanolamines. Independent of its catalytic activity, acts as a ligand for integrins. Binds to and activates integrins ITGAV:ITGB3, ITGA4:ITGB1 and ITGA5:ITGB1. Binds to a site (site 2) which is distinct from the classical ligand-binding site (site 1) and induces integrin conformational changes and enhanced ligand binding to site 1. Induces cell proliferation in an integrin-dependent manner. The protein is Phospholipase A2, membrane associated (PLA2G2A) of Homo sapiens (Human).